Reading from the N-terminus, the 568-residue chain is Urocanate hydratase (568 aa).

NAD(+) contacts are provided by residues Gly58–Gly59, Gln136, Gly182–Gly184, Glu202, Arg207, Asn248–Ala249, Gln269–His273, Tyr279–Leu280, and Tyr328. Cys416 is an active-site residue. Position 498 (Gly498) interacts with NAD(+).

The protein belongs to the urocanase family. It depends on NAD(+) as a cofactor.

It is found in the cytoplasm. The catalysed reaction is 4-imidazolone-5-propanoate = trans-urocanate + H2O. It participates in amino-acid degradation; L-histidine degradation into L-glutamate; N-formimidoyl-L-glutamate from L-histidine: step 2/3. Its function is as follows. Catalyzes the conversion of urocanate to 4-imidazolone-5-propionate. This chain is Urocanate hydratase, found in Photobacterium profundum (strain SS9).